We begin with the raw amino-acid sequence, 262 residues long: Phenylalanine-4-hydroxylase (262 aa).

Positions 121, 126, and 166 each coordinate Fe cation.

This sequence belongs to the biopterin-dependent aromatic amino acid hydroxylase family. Monomer. Fe(2+) is required as a cofactor.

The catalysed reaction is (6R)-L-erythro-5,6,7,8-tetrahydrobiopterin + L-phenylalanine + O2 = (4aS,6R)-4a-hydroxy-L-erythro-5,6,7,8-tetrahydrobiopterin + L-tyrosine. It functions in the pathway amino-acid degradation; L-phenylalanine degradation; acetoacetate and fumarate from L-phenylalanine: step 1/6. This is Phenylalanine-4-hydroxylase (phhA) from Pseudomonas aeruginosa (strain ATCC 15692 / DSM 22644 / CIP 104116 / JCM 14847 / LMG 12228 / 1C / PRS 101 / PAO1).